A 566-amino-acid polypeptide reads, in one-letter code: Proline--tRNA ligase 1 (566 aa).

It belongs to the class-II aminoacyl-tRNA synthetase family. ProS type 1 subfamily. As to quaternary structure, homodimer.

The protein resides in the cytoplasm. The catalysed reaction is tRNA(Pro) + L-proline + ATP = L-prolyl-tRNA(Pro) + AMP + diphosphate. Its function is as follows. Catalyzes the attachment of proline to tRNA(Pro) in a two-step reaction: proline is first activated by ATP to form Pro-AMP and then transferred to the acceptor end of tRNA(Pro). As ProRS can inadvertently accommodate and process non-cognate amino acids such as alanine and cysteine, to avoid such errors it has two additional distinct editing activities against alanine. One activity is designated as 'pretransfer' editing and involves the tRNA(Pro)-independent hydrolysis of activated Ala-AMP. The other activity is designated 'posttransfer' editing and involves deacylation of mischarged Ala-tRNA(Pro). The misacylated Cys-tRNA(Pro) is not edited by ProRS. The sequence is that of Proline--tRNA ligase 1 from Bacillus cereus (strain ATCC 14579 / DSM 31 / CCUG 7414 / JCM 2152 / NBRC 15305 / NCIMB 9373 / NCTC 2599 / NRRL B-3711).